The sequence spans 532 residues: Probable bifunctional tRNA threonylcarbamoyladenosine biosynthesis protein (532 aa).

The tract at residues 1–323 is kae1; sequence MRVLGVEGTA…FRPDEVSVTW (323 aa). Residues His107 and His111 each contribute to the Fe cation site. L-threonylcarbamoyladenylate is bound by residues 128 to 132, Asp160, Gly173, Glu177, and Asn256; that span reads NASGA. Asp284 provides a ligand contact to Fe cation. The Protein kinase domain occupies 329 to 532; it reads PARDPGADAV…GRYQDDPETA (204 aa). Residues 338 to 346 and Lys355 each bind ATP; that span reads VRQGAEATV. Residue Asp444 is the Proton acceptor; for kinase activity of the active site.

It in the N-terminal section; belongs to the KAE1 / TsaD family. In the C-terminal section; belongs to the protein kinase superfamily. Tyr protein kinase family. BUD32 subfamily. As to quaternary structure, component of the KEOPS complex that consists of Kae1, Bud32, Cgi121 and Pcc1; the whole complex dimerizes. It depends on Fe(2+) as a cofactor.

It localises to the cytoplasm. It carries out the reaction L-seryl-[protein] + ATP = O-phospho-L-seryl-[protein] + ADP + H(+). The catalysed reaction is L-threonyl-[protein] + ATP = O-phospho-L-threonyl-[protein] + ADP + H(+). The enzyme catalyses L-threonylcarbamoyladenylate + adenosine(37) in tRNA = N(6)-L-threonylcarbamoyladenosine(37) in tRNA + AMP + H(+). Its function is as follows. Required for the formation of a threonylcarbamoyl group on adenosine at position 37 (t(6)A37) in tRNAs that read codons beginning with adenine. Is a component of the KEOPS complex that is probably involved in the transfer of the threonylcarbamoyl moiety of threonylcarbamoyl-AMP (TC-AMP) to the N6 group of A37. The Kae1 domain likely plays a direct catalytic role in this reaction. The Bud32 domain probably displays kinase activity that regulates Kae1 function. This is Probable bifunctional tRNA threonylcarbamoyladenosine biosynthesis protein from Halobacterium salinarum (strain ATCC 700922 / JCM 11081 / NRC-1) (Halobacterium halobium).